Reading from the N-terminus, the 287-residue chain is 4-hydroxybenzoate octaprenyltransferase (287 aa).

Transmembrane regions (helical) follow at residues 41-61 (WPLL…GCAM), 89-109 (WEAI…ILPL), 133-153 (FFAI…PMAF), 158-178 (DTVP…SVAY), 202-224 (FGRF…YVWI), and 267-287 (NNWL…LAGS).

The protein belongs to the UbiA prenyltransferase family. Requires Mg(2+) as cofactor.

It is found in the cell inner membrane. The catalysed reaction is all-trans-octaprenyl diphosphate + 4-hydroxybenzoate = 4-hydroxy-3-(all-trans-octaprenyl)benzoate + diphosphate. It functions in the pathway cofactor biosynthesis; ubiquinone biosynthesis. In terms of biological role, catalyzes the prenylation of para-hydroxybenzoate (PHB) with an all-trans polyprenyl group. Mediates the second step in the final reaction sequence of ubiquinone-8 (UQ-8) biosynthesis, which is the condensation of the polyisoprenoid side chain with PHB, generating the first membrane-bound Q intermediate 3-octaprenyl-4-hydroxybenzoate. This chain is 4-hydroxybenzoate octaprenyltransferase, found in Burkholderia lata (strain ATCC 17760 / DSM 23089 / LMG 22485 / NCIMB 9086 / R18194 / 383).